We begin with the raw amino-acid sequence, 244 residues long: 14-3-3 protein homolog 1 (244 aa).

It belongs to the 14-3-3 family.

The protein is 14-3-3 protein homolog 1 of Echinococcus granulosus (Hydatid tapeworm).